The primary structure comprises 154 residues: SsrA-binding protein (154 aa).

The span at 123-142 shows a compositional bias: basic and acidic residues; it reads AEHDKRHTIKDRDWQREQGR. Positions 123-154 are disordered; that stretch reads AEHDKRHTIKDRDWQREQGRLMRHKVSAPHKD. Residues 143–154 are compositionally biased toward basic residues; that stretch reads LMRHKVSAPHKD.

It belongs to the SmpB family.

It is found in the cytoplasm. Required for rescue of stalled ribosomes mediated by trans-translation. Binds to transfer-messenger RNA (tmRNA), required for stable association of tmRNA with ribosomes. tmRNA and SmpB together mimic tRNA shape, replacing the anticodon stem-loop with SmpB. tmRNA is encoded by the ssrA gene; the 2 termini fold to resemble tRNA(Ala) and it encodes a 'tag peptide', a short internal open reading frame. During trans-translation Ala-aminoacylated tmRNA acts like a tRNA, entering the A-site of stalled ribosomes, displacing the stalled mRNA. The ribosome then switches to translate the ORF on the tmRNA; the nascent peptide is terminated with the 'tag peptide' encoded by the tmRNA and targeted for degradation. The ribosome is freed to recommence translation, which seems to be the essential function of trans-translation. This is SsrA-binding protein from Leptothrix cholodnii (strain ATCC 51168 / LMG 8142 / SP-6) (Leptothrix discophora (strain SP-6)).